The sequence spans 694 residues: uncharacterized protein (694 aa).

Positions 15–51 (HKEKMELLDQFDNERKEWESQWKIMQKKIEELCREVK) form a coiled coil. Disordered stretches follow at residues 259–286 (LKRN…EQAY), 461–490 (QNHS…QSND), and 643–680 (NASH…RRTT). 2 stretches are compositionally biased toward polar residues: residues 272 to 283 (STSRNFPSSDSE) and 476 to 490 (DTSS…QSND). Residues 663–677 (SRWASRSPSAPPALR) are compositionally biased toward low complexity.

This is an uncharacterized protein from Homo sapiens (Human).